Consider the following 136-residue polypeptide: MTGGGKSGGKASGSKNAQSRSSKAGLAFPVGRVHRLLRKGNYAQRVGAGAPVYLAAVLEYLAAEILELAGNAARDNKKTRIIPRHLQLAIRNDEELNKLLGHVTIAQGGVLPNIHQNLLPKKTGKTAGGKNASQEM.

The span at 1-11 (MTGGGKSGGKA) shows a compositional bias: gly residues. The tract at residues 1-24 (MTGGGKSGGKASGSKNAQSRSSKA) is disordered. N6-acetyllysine occurs at positions 6 and 10. Residue Gln-107 is modified to N5-methylglutamine. Position 133 is a phosphoserine (Ser-133). The [ST]-Q motif motif lies at 133–134 (SQ).

It belongs to the histone H2A family. As to quaternary structure, the nucleosome is a histone octamer containing two molecules each of H2A, H2B, H3 and H4 assembled in one H3-H4 heterotetramer and two H2A-H2B heterodimers. The octamer wraps approximately 147 bp of DNA. Phosphorylated to form H2AS128ph (gamma-H2A) in response to DNA double-strand breaks (DSBs) generated by exogenous genotoxic agents and by stalled replication forks. Phosphorylation is dependent on the DNA damage checkpoint kinases MEC1/ATR and TEL1/ATM, spreads on either side of a detected DSB site and may mark the surrounding chromatin for recruitment of proteins required for DNA damage signaling and repair. Gamma-H2A is removed from the DNA prior to the strand invasion-primer extension step of the repair process and subsequently dephosphorylated. Dephosphorylation is necessary for efficient recovery from the DNA damage checkpoint. In terms of processing, acetylated by ESA1 to form H2AK4ac and H2AK7ac.

The protein resides in the nucleus. It localises to the chromosome. In terms of biological role, core component of nucleosome which plays a central role in DNA double strand break (DSB) repair. Nucleosomes wrap and compact DNA into chromatin, limiting DNA accessibility to the cellular machineries which require DNA as a template. Histones thereby play a central role in transcription regulation, DNA repair, DNA replication and chromosomal stability. DNA accessibility is regulated via a complex set of post-translational modifications of histones, also called histone code, and nucleosome remodeling. The chain is Histone H2A (HTA1) from Pyricularia oryzae (strain Y34) (Rice blast fungus).